The primary structure comprises 258 residues: Adenylate kinase (258 aa).

52–57 (GAGKGT) is a binding site for ATP. Positions 72–101 (ATGDMLRSQVAKKTALGKEAKKIMDQGGLV) are NMP. AMP is bound by residues T73, R78, 99 to 101 (GLV), 128 to 131 (GFPR), and Q135. The segment at 169-206 (GRLVHPASGRSYHKIFNPPKEEMKDDVTGEPLIQRSDD) is LID. Residues R170 and 179 to 180 (SY) contribute to the ATP site. Positions 203 and 214 each coordinate AMP. Q242 provides a ligand contact to ATP.

The protein belongs to the adenylate kinase family. AK2 subfamily. As to quaternary structure, monomer.

Its subcellular location is the cytoplasm. It is found in the cytosol. The protein localises to the mitochondrion intermembrane space. It catalyses the reaction AMP + ATP = 2 ADP. Functionally, catalyzes the reversible transfer of the terminal phosphate group between ATP and AMP. Plays an important role in cellular energy homeostasis and in adenine nucleotide metabolism. Adenylate kinase activity is critical for regulation of the phosphate utilization and the AMP de novo biosynthesis pathways. The sequence is that of Adenylate kinase (adk1) from Aspergillus niger (strain ATCC MYA-4892 / CBS 513.88 / FGSC A1513).